The chain runs to 477 residues: ATP synthase subunit beta (477 aa).

163-170 (GGAGVGKT) is an ATP binding site.

It belongs to the ATPase alpha/beta chains family. As to quaternary structure, F-type ATPases have 2 components, CF(1) - the catalytic core - and CF(0) - the membrane proton channel. CF(1) has five subunits: alpha(3), beta(3), gamma(1), delta(1), epsilon(1). CF(0) has four main subunits: a(1), b(1), b'(1) and c(9-12).

It is found in the cellular thylakoid membrane. The catalysed reaction is ATP + H2O + 4 H(+)(in) = ADP + phosphate + 5 H(+)(out). In terms of biological role, produces ATP from ADP in the presence of a proton gradient across the membrane. The catalytic sites are hosted primarily by the beta subunits. The protein is ATP synthase subunit beta of Synechococcus sp. (strain JA-3-3Ab) (Cyanobacteria bacterium Yellowstone A-Prime).